A 448-amino-acid chain; its full sequence is Dual specificity mitogen-activated protein kinase kinase 5 (448 aa).

Residues 18-25 (VIRIKIPN) form an interaction with MAPK7 region. One can recognise a PB1 domain in the interval 18–109 (VIRIKIPNSG…EPLQIFPRAC (92 aa)). The interaction with MAP3K2/MAP3K3 stretch occupies residues 64–68 (DEDGD). Residues 116–144 (NIHGLKVNTRAGPSQHTSPVVSDSLPSNS) form a disordered region. The interval 117 to 131 (IHGLKVNTRAGPSQH) is interaction with MAPK7. The span at 126 to 144 (AGPSQHTSPVVSDSLPSNS) shows a compositional bias: polar residues. A Protein kinase domain is found at 166–419 (IRYRDTLGHG…PEELMGHPFI (254 aa)). Residues 172-180 (LGHGNGGTV) and lysine 195 contribute to the ATP site. Aspartate 283 functions as the Proton acceptor in the catalytic mechanism. Serine 311 carries the phosphoserine modification. Threonine 315 is modified (phosphothreonine).

The protein belongs to the protein kinase superfamily. STE Ser/Thr protein kinase family. MAP kinase kinase subfamily. As to quaternary structure, interacts with PARD6A, MAP3K3 and MAPK7. Forms a complex with SQSTM1 and PRKCZ or PRKCI. Requires Mg(2+) as cofactor. In terms of processing, activated by phosphorylation on Ser/Thr by MAP kinase kinase kinases. In terms of tissue distribution, expressed in the liver and brain (at protein level). As to expression, expressed in the liver, muscle, testes, lung, kidney, spleen, heart and brain (at protein level).

It localises to the cytoplasm. Its subcellular location is the cytosol. The protein localises to the membrane. It catalyses the reaction L-seryl-[protein] + ATP = O-phospho-L-seryl-[protein] + ADP + H(+). The catalysed reaction is L-threonyl-[protein] + ATP = O-phospho-L-threonyl-[protein] + ADP + H(+). The enzyme catalyses L-tyrosyl-[protein] + ATP = O-phospho-L-tyrosyl-[protein] + ADP + H(+). Functionally, acts as a scaffold for the formation of a ternary MAP3K2/MAP3K3-MAP3K5-MAPK7 signaling complex. Activation of this pathway appears to play a critical role in protecting cells from stress-induced apoptosis, neuronal survival and cardiac development and angiogenesis. As part of the MAPK/ERK signaling pathway, acts as a negative regulator of apoptosis in cardiomyocytes via promotion of STUB1/CHIP-mediated ubiquitination and degradation of ICER-type isoforms of CREM. The sequence is that of Dual specificity mitogen-activated protein kinase kinase 5 (Map2k5) from Rattus norvegicus (Rat).